The sequence spans 302 residues: Surfeit locus protein 4 homolog (302 aa).

6 helical membrane-spanning segments follow: residues 95–115 (APLL…LVVF), 120–140 (AYAI…YGLI), 193–213 (VLLI…ISWT), 215–235 (ILVH…FKAK), 236–256 (FFAA…NSFW), and 271–291 (DFFQ…TGPG). The Di-lysine motif signature appears at 299–302 (KKIY).

The protein belongs to the SURF4 family.

The protein resides in the endoplasmic reticulum membrane. The protein is Surfeit locus protein 4 homolog of Schizosaccharomyces pombe (strain 972 / ATCC 24843) (Fission yeast).